A 338-amino-acid chain; its full sequence is RNA 3'-terminal phosphate cyclase (338 aa).

ATP-binding positions include Q103 and 283–287 (YLADQ). H308 functions as the Tele-AMP-histidine intermediate in the catalytic mechanism.

Belongs to the RNA 3'-terminal cyclase family. Type 1 subfamily.

It is found in the cytoplasm. It carries out the reaction a 3'-end 3'-phospho-ribonucleotide-RNA + ATP = a 3'-end 2',3'-cyclophospho-ribonucleotide-RNA + AMP + diphosphate. In terms of biological role, catalyzes the conversion of 3'-phosphate to a 2',3'-cyclic phosphodiester at the end of RNA. The mechanism of action of the enzyme occurs in 3 steps: (A) adenylation of the enzyme by ATP; (B) transfer of adenylate to an RNA-N3'P to produce RNA-N3'PP5'A; (C) and attack of the adjacent 2'-hydroxyl on the 3'-phosphorus in the diester linkage to produce the cyclic end product. The biological role of this enzyme is unknown but it is likely to function in some aspects of cellular RNA processing. This chain is RNA 3'-terminal phosphate cyclase, found in Escherichia coli O127:H6 (strain E2348/69 / EPEC).